A 176-amino-acid polypeptide reads, in one-letter code: Telomerase RNA component interacting RNase (176 aa).

Basic and acidic residues predominate over residues 1 to 12 (MAARGRRAEPQG). The interval 1–121 (MAARGRRAEP…TLSFVGKRRG (121 aa)) is disordered. Residues 45 to 56 (SGAGSSPVSGGV) show a composition bias toward low complexity. A compositionally biased stretch (basic and acidic residues) spans 68-83 (LFKRKMEEEQRQRQEE). Positions 90–101 (RPDQSAAAAGPG) are enriched in low complexity. At lysine 146 the chain carries N6-acetyllysine.

In terms of assembly, part of the telomerase RNA 3' end complex which contains about 488 proteins.

With respect to regulation, zn(2+) inhibits the RNase activity while Mg(2+), Ca(2+), Mn(2+), K(+), Na(+), EDTA and EGTA show little effect on the exoribonuclease activity. Its function is as follows. Exoribonuclease that is part of the telomerase RNA 3' end processing complex and which has the ability to cleave all four unpaired RNA nucleotides from the 5' end or 3' end with higher efficiency for purine bases. This chain is Telomerase RNA component interacting RNase, found in Homo sapiens (Human).